Consider the following 343-residue polypeptide: NADH-cytochrome b5 reductase 2 (343 aa).

Residues 41–61 (ILLGAAAVGLAGAGAYFFSGA) traverse the membrane as a helical segment. Residues 92-197 (QGWLSLKLEE…KGPLPKYPWE (106 aa)) form the FAD-binding FR-type domain. 200 to 235 (KHKHIALVAGGTGITPMYQLIRAIFNNPDDKTKVTL) provides a ligand contact to FAD.

Belongs to the flavoprotein pyridine nucleotide cytochrome reductase family. Requires FAD as cofactor.

The protein resides in the mitochondrion outer membrane. The enzyme catalyses 2 Fe(III)-[cytochrome b5] + NADH = 2 Fe(II)-[cytochrome b5] + NAD(+) + H(+). Functionally, may mediate the reduction of outer membrane cytochrome b5. The polypeptide is NADH-cytochrome b5 reductase 2 (mcr-1) (Neurospora crassa (strain ATCC 24698 / 74-OR23-1A / CBS 708.71 / DSM 1257 / FGSC 987)).